The primary structure comprises 379 residues: 1-deoxy-D-xylulose 5-phosphate reductoisomerase (379 aa).

NADPH is bound by residues T10, G11, S12, I13, G36, N38, and N121. K122 lines the 1-deoxy-D-xylulose 5-phosphate pocket. NADPH is bound at residue E123. D147 is a binding site for Mn(2+). 1-deoxy-D-xylulose 5-phosphate is bound by residues S148, E149, S173, and H196. E149 contacts Mn(2+). Residue G202 participates in NADPH binding. 1-deoxy-D-xylulose 5-phosphate is bound by residues S209, N214, K215, and E218. E218 is a Mn(2+) binding site.

It belongs to the DXR family. Requires Mg(2+) as cofactor. Mn(2+) serves as cofactor.

The catalysed reaction is 2-C-methyl-D-erythritol 4-phosphate + NADP(+) = 1-deoxy-D-xylulose 5-phosphate + NADPH + H(+). It functions in the pathway isoprenoid biosynthesis; isopentenyl diphosphate biosynthesis via DXP pathway; isopentenyl diphosphate from 1-deoxy-D-xylulose 5-phosphate: step 1/6. Functionally, catalyzes the NADPH-dependent rearrangement and reduction of 1-deoxy-D-xylulose-5-phosphate (DXP) to 2-C-methyl-D-erythritol 4-phosphate (MEP). The sequence is that of 1-deoxy-D-xylulose 5-phosphate reductoisomerase from Shouchella clausii (strain KSM-K16) (Alkalihalobacillus clausii).